We begin with the raw amino-acid sequence, 250 residues long: Galectin-3 (250 aa).

Residues M1–P60 are disordered. An N-acetylalanine modification is found at A2. Phosphoserine occurs at positions 6 and 12. 3 consecutive repeat copies span residues Y36–A44, Y45–A53, and Y54–A62. Residues Y36–A109 are 8 X 9 AA tandem repeats of Y-P-G-X(3)-P-G-A. Residues G38 to G47 are compositionally biased toward low complexity. Pro residues predominate over residues Q48–P60. The 4; approximate repeat unit spans residues Y63–A69. Repeat 5 spans residues Y70 to V78. A 6; approximate repeat occupies Y79–A88. A 7; approximate repeat occupies Y89 to A100. The 8; approximate repeat unit spans residues Y101–A109. The region spanning Y118 to T248 is the Galectin domain. W181 to Q187 contacts a beta-D-galactoside. Phosphoserine is present on S188. A Nuclear export signal motif is present at residues K226–D241.

As to quaternary structure, probably forms homo- or heterodimers. Interacts with DMBT1. Interacts with CD6 and ALCAM. Forms a complex with the ITGA3, ITGB1 and CSPG4. Interacts with LGALS3BP, LYPD3, ZFTRAF1 and UACA. Interacts with TRIM16; this interaction mediates autophagy of damage endomembranes. Interacts with cargo receptor TMED10; the interaction mediates the translocation from the cytoplasm into the ERGIC (endoplasmic reticulum-Golgi intermediate compartment) and thereby secretion. As to expression, a major expression is found in the colonic epithelium. It is also abundant in the activated macrophages. Expressed in fetal membranes.

Its subcellular location is the cytoplasm. It is found in the nucleus. The protein resides in the secreted. Functionally, galactose-specific lectin which binds IgE. May mediate with the alpha-3, beta-1 integrin the stimulation by CSPG4 of endothelial cells migration. Together with DMBT1, required for terminal differentiation of columnar epithelial cells during early embryogenesis. In the nucleus: acts as a pre-mRNA splicing factor. Involved in acute inflammatory responses including neutrophil activation and adhesion, chemoattraction of monocytes macrophages, opsonization of apoptotic neutrophils, and activation of mast cells. Together with TRIM16, coordinates the recognition of membrane damage with mobilization of the core autophagy regulators ATG16L1 and BECN1 in response to damaged endomembranes. The chain is Galectin-3 from Homo sapiens (Human).